The primary structure comprises 233 residues: Ribose-5-phosphate isomerase A (233 aa).

Residues 28–31 (SGST), 83–86 (DGAD), and 96–99 (KGGG) contribute to the substrate site. Catalysis depends on glutamate 105, which acts as the Proton acceptor. Lysine 123 contributes to the substrate binding site.

This sequence belongs to the ribose 5-phosphate isomerase family. As to quaternary structure, homodimer.

The enzyme catalyses aldehydo-D-ribose 5-phosphate = D-ribulose 5-phosphate. It participates in carbohydrate degradation; pentose phosphate pathway; D-ribose 5-phosphate from D-ribulose 5-phosphate (non-oxidative stage): step 1/1. Its function is as follows. Catalyzes the reversible conversion of ribose-5-phosphate to ribulose 5-phosphate. The chain is Ribose-5-phosphate isomerase A from Bartonella bacilliformis (strain ATCC 35685 / KC583 / Herrer 020/F12,63).